We begin with the raw amino-acid sequence, 477 residues long: RTX-I toxin determinant D (477 aa).

Residues 1 to 59 (MKTWLMGLYEFFQAYKTVWTEIWKIRHQLDTPDREKDENEFLPAHLELIETPVSKKPRL) lie on the Cytoplasmic side of the membrane. Residues 60–80 (IAYLIMLFLFLALVISIVSHV) form a helical membrane-spanning segment. The Periplasmic segment spans residues 81-477 (EIVATATGKL…ESVSESLRER (397 aa)).

This sequence belongs to the membrane fusion protein (MFP) (TC 8.A.1) family.

The protein resides in the cell inner membrane. In terms of biological role, involved in the transport of the toxin RTX-I as well as that of RTX-II. This Actinobacillus pleuropneumoniae (Haemophilus pleuropneumoniae) protein is RTX-I toxin determinant D (apxID).